We begin with the raw amino-acid sequence, 364 residues long: D-alanine--D-alanine ligase (364 aa).

Residues 134 to 344 form the ATP-grasp domain; that stretch reads KVLLKSFNIP…YESLVDKLIT (211 aa). 167-222 is an ATP binding site; that stretch reads NNKLNYPVIVKPSVLGSSIGINVAYNVSQIEKYIEEAFEYDLTVVVEKFIKAREIE. Residues D297, E311, and N313 each contribute to the Mg(2+) site.

It belongs to the D-alanine--D-alanine ligase family. It depends on Mg(2+) as a cofactor. Mn(2+) is required as a cofactor.

Its subcellular location is the cytoplasm. The enzyme catalyses 2 D-alanine + ATP = D-alanyl-D-alanine + ADP + phosphate + H(+). It participates in cell wall biogenesis; peptidoglycan biosynthesis. In terms of biological role, cell wall formation. This Borrelia duttonii (strain Ly) protein is D-alanine--D-alanine ligase.